The sequence spans 376 residues: N-acetyldiaminopimelate deacetylase (376 aa).

Residue aspartate 69 is part of the active site. Glutamate 128 (proton acceptor) is an active-site residue.

It belongs to the peptidase M20A family. N-acetyldiaminopimelate deacetylase subfamily.

The enzyme catalyses N-acetyl-(2S,6S)-2,6-diaminopimelate + H2O = (2S,6S)-2,6-diaminopimelate + acetate. It functions in the pathway amino-acid biosynthesis; L-lysine biosynthesis via DAP pathway; LL-2,6-diaminopimelate from (S)-tetrahydrodipicolinate (acetylase route): step 3/3. Functionally, catalyzes the conversion of N-acetyl-diaminopimelate to diaminopimelate and acetate. The sequence is that of N-acetyldiaminopimelate deacetylase from Streptococcus pneumoniae (strain P1031).